The chain runs to 77 residues: Putative snRNP Sm-like protein (77 aa).

The Sm domain occupies 4 to 76 (RPLDVLNRSL…VVFVSPAPGG (73 aa)).

Belongs to the snRNP Sm proteins family.

The protein is Putative snRNP Sm-like protein of Archaeoglobus fulgidus (strain ATCC 49558 / DSM 4304 / JCM 9628 / NBRC 100126 / VC-16).